A 721-amino-acid polypeptide reads, in one-letter code: Choline O-acetyltransferase (721 aa).

His-419 acts as the Proton acceptor in catalysis. CoA contacts are provided by residues 496 to 508 (GKTFIKSCQVSPD), Ser-534, and Gln-656.

The protein belongs to the carnitine/choline acetyltransferase family. In terms of assembly, the 54 kDa and 13 kDa chains exist as a heterodimer. Post-translationally, the N-terminus of choline O-acetyltransferase 67 kDa and 54 kDa chains are blocked.

It catalyses the reaction choline + acetyl-CoA = acetylcholine + CoA. In terms of biological role, catalyzes the reversible synthesis of acetylcholine (ACh) from acetyl CoA and choline at cholinergic synapses. In Drosophila melanogaster (Fruit fly), this protein is Choline O-acetyltransferase.